The primary structure comprises 374 residues: Envelope glycoprotein M (374 aa).

Residues 1 to 16 (MKSSKKDIFILHIWLK) lie on the Intravirion side of the membrane. A helical membrane pass occupies residues 17-37 (LMGCYVFMFITSVVLPIAAMF). Residues 38 to 82 (PNLGFPCYYNTLVDYSKLNLREKNQAQHLTPTLFLEAPEMFFYVT) lie on the Virion surface side of the membrane. The helical transmembrane segment at 83–103 (YSFIVDCCSLVYYALAAVAVV) threads the bilayer. At 104-117 (KAKKHAPGLMALSQ) the chain is on the intravirion side. A helical transmembrane segment spans residues 118-138 (WIMAVGSPTLLYMAVLKLWTI). Over 139-149 (QLYIHTLSYKH) the chain is Virion surface. The chain crosses the membrane as a helical span at residues 150–170 (IYLAAFVYCLHWLLSMVYTEC). Topologically, residues 171-207 (YITNVSSQWTSSELKKTIPENILLYRVVHVLKPIMMN) are intravirion. A helical membrane pass occupies residues 208 to 228 (VHLSVVALETLIFCLSFMMAI). Residues 229–238 (GNSFYVMVSD) are Virion surface-facing. Residues 239 to 259 (IVFGAINLYLILPIIWYFVTE) traverse the membrane as a helical segment. Topologically, residues 260–269 (FWLSKYLPRQ) are intravirion. A helical membrane pass occupies residues 270–290 (FGFYFGVLVASIILILPVVRY). The Virion surface portion of the chain corresponds to 291-301 (DKIFVAAQIHR). The helical transmembrane segment at 302–322 (AVSINIAMIPLCALVALLVRA) threads the bilayer. At 323–374 (CRVYTDRKKIAYTALPSKPQTIKYTKPIEPSTKQAPDSSIFLEEESDTDFEQ) the chain is on the intravirion side. The interval 345-374 (KYTKPIEPSTKQAPDSSIFLEEESDTDFEQ) is disordered. Positions 364-374 (LEEESDTDFEQ) are enriched in acidic residues.

This sequence belongs to the herpesviridae glycoprotein M family. As to quaternary structure, interacts (via N-terminus) with gN (via N-terminus). The gM-gN heterodimer forms the gCII complex.

It is found in the virion membrane. The protein localises to the host Golgi apparatus. It localises to the host trans-Golgi network. Its subcellular location is the host endosome membrane. The protein resides in the host nucleus inner membrane. Functionally, envelope glycoprotein important for virion assembly and egress. Plays a role in the correct incorporation of gH-gL into virion membrane. Directs the glycoprotein N (gN) to the host trans-Golgi network. The sequence is that of Envelope glycoprotein M from Connochaetes taurinus (Blue wildebeest).